The following is a 646-amino-acid chain: bZIP transcription factor 39 (646 aa).

The Cytoplasmic segment spans residues 1–311 (MAEPALLDPT…KSKSKTKTKK (311 aa)). The tract at residues 25–172 (HELPLAGGGG…GGTVCEEEED (148 aa)) is disordered. Positions 43-53 (LDGLEFDLPGD) are enriched in low complexity. Over residues 59–69 (FLLRSPERDDS) the composition is skewed to basic and acidic residues. Positions 71–98 (EGSAAGSGPTASPSSSPTTSASNSAVAN) are enriched in low complexity. The span at 103-113 (EVKHEESDEGR) shows a compositional bias: basic and acidic residues. A compositionally biased stretch (acidic residues) spans 159-172 (DSDEGGTVCEEEED). The region spanning 172-232 (DERRAARLMR…AENATLRQQL (61 aa)) is the bZIP domain. Positions 174–205 (RRAARLMRNRESAQLSRQRKKRYVEELEEKVK) are basic motif. The interval 211 to 218 (INDLNSRI) is leucine-zipper. The tract at residues 272–308 (LVPIPRLKPQQPVPSSKVVKKPESKKTVENKSKSKTK) is disordered. The segment covering 279–288 (KPQQPVPSSK) has biased composition (low complexity). The segment covering 291-303 (KKPESKKTVENKS) has biased composition (basic and acidic residues). Residues 312 to 332 (VASVSLLGLLLIMLVFGAFIP) form a helical membrane-spanning segment. The Lumenal segment spans residues 333–646 (GFNHNFGMCG…FKSSSPHLVN (314 aa)). N-linked (GlcNAc...) asparagine glycosylation is found at asparagine 371, asparagine 399, asparagine 525, asparagine 530, asparagine 565, and asparagine 571. A disordered region spans residues 560–585 (TGKTANNTEPFNRTSESSSKLPDSKP). Positions 562–585 (KTANNTEPFNRTSESSSKLPDSKP) are enriched in polar residues.

This sequence belongs to the bZIP family. In terms of tissue distribution, highly expressed in leaf blade, and at lower levels in roots, leaf sheaths, flowers and seeds.

It is found in the endoplasmic reticulum membrane. The protein resides in the nucleus. Transcription factor involved in endoplasmic reticulum (ER) stress response. Acts as a ER stress sensor and activates the transcription factor BZIP50 and the chaperone BIP1. The sequence is that of bZIP transcription factor 39 from Oryza sativa subsp. japonica (Rice).